The primary structure comprises 382 residues: Saccharopine dehydrogenase [NAD(+), L-lysine-forming] (382 aa).

The L-saccharopine site is built by Arg-20 and Lys-79. Catalysis depends on Lys-79, which acts as the Proton acceptor. His-98 serves as the catalytic Proton donor. Gln-103 contacts L-saccharopine. Arg-132 is a binding site for NAD(+). The L-saccharopine site is built by Arg-133 and Phe-137. NAD(+) is bound by residues 215–216 (GR), Asp-239, Thr-243, Tyr-263, and Val-290. A disulfide bridge connects residues Cys-217 and Cys-261. L-saccharopine is bound at residue 291–293 (SAD). 330-333 (IDHL) contacts NAD(+).

It belongs to the AlaDH/PNT family. In terms of assembly, monomer.

The catalysed reaction is L-saccharopine + NAD(+) + H2O = L-lysine + 2-oxoglutarate + NADH + H(+). It participates in amino-acid biosynthesis; L-lysine biosynthesis via AAA pathway; L-lysine from L-alpha-aminoadipate (fungal route): step 3/3. In terms of biological role, catalyzes the NAD(+)-dependent cleavage of saccharopine to L-lysine and 2-oxoglutarate, the final step in the alpha-aminoadipate (AAA) pathway for lysin biosynthesis. This Candida albicans (strain SC5314 / ATCC MYA-2876) (Yeast) protein is Saccharopine dehydrogenase [NAD(+), L-lysine-forming].